The chain runs to 320 residues: Cytochrome f (320 aa).

An N-terminal signal peptide occupies residues Met-1 to Ala-35. Heme-binding residues include Tyr-36, Cys-56, Cys-59, and His-60. The helical transmembrane segment at Val-286–Leu-305 threads the bilayer.

It belongs to the cytochrome f family. The 4 large subunits of the cytochrome b6-f complex are cytochrome b6, subunit IV (17 kDa polypeptide, petD), cytochrome f and the Rieske protein, while the 4 small subunits are PetG, PetL, PetM and PetN. The complex functions as a dimer. The cofactor is heme.

It localises to the plastid. Its subcellular location is the chloroplast thylakoid membrane. In terms of biological role, component of the cytochrome b6-f complex, which mediates electron transfer between photosystem II (PSII) and photosystem I (PSI), cyclic electron flow around PSI, and state transitions. The sequence is that of Cytochrome f (petA) from Zea mays (Maize).